An 88-amino-acid polypeptide reads, in one-letter code: UPF0297 protein Cphy_2298 (88 aa).

Belongs to the UPF0297 family.

The protein is UPF0297 protein Cphy_2298 of Lachnoclostridium phytofermentans (strain ATCC 700394 / DSM 18823 / ISDg) (Clostridium phytofermentans).